Here is a 440-residue protein sequence, read N- to C-terminus: Probable exopolygalacturonase C (440 aa).

Positions 1–21 (MLITNPALLGILASLVPLALG) are cleaved as a signal peptide. Asparagine 84 and asparagine 151 each carry an N-linked (GlcNAc...) asparagine glycan. PbH1 repeat units follow at residues 188–210 (GDDI…PFNT), 217–238 (GTNI…AVNT), and 240–261 (SHNI…SIGS). Asparagine 219 carries an N-linked (GlcNAc...) asparagine glycan. The Proton donor role is filled by aspartate 231. The active site involves histidine 255. A glycan (N-linked (GlcNAc...) asparagine) is linked at asparagine 271. A PbH1 4 repeat occupies 272–293 (ITNLRFEDVTVIDALYAARFKS). Asparagine 313 carries N-linked (GlcNAc...) asparagine glycosylation. Cysteine 389 and cysteine 395 are joined by a disulfide. An N-linked (GlcNAc...) asparagine glycan is attached at asparagine 434.

This sequence belongs to the glycosyl hydrolase 28 family.

Its subcellular location is the secreted. The enzyme catalyses [(1-&gt;4)-alpha-D-galacturonosyl](n) + H2O = alpha-D-galacturonate + [(1-&gt;4)-alpha-D-galacturonosyl](n-1). Its function is as follows. Specific in hydrolyzing the terminal glycosidic bond of polygalacturonic acid and oligogalacturonates. The chain is Probable exopolygalacturonase C (pgxC) from Aspergillus fumigatus (strain ATCC MYA-4609 / CBS 101355 / FGSC A1100 / Af293) (Neosartorya fumigata).